We begin with the raw amino-acid sequence, 579 residues long: Golvesin (579 aa).

Residues 1–75 are required for targeting to the plasma membrane; it reads MTSVNEHSLL…NNNNNNNNNN (75 aa). A disordered region spans residues 1–79; the sequence is MTSVNEHSLL…NNNNNNSNTG (79 aa). The Lumenal portion of the chain corresponds to 1–94; the sequence is MTSVNEHSLL…KKKKWNFRKK (94 aa). Over residues 11 to 77 the composition is skewed to low complexity; it reads INNNENNDNN…NNNNNNNNSN (67 aa). The chain crosses the membrane as a helical; Signal-anchor for type III membrane protein span at residues 95–115; the sequence is ILPMIVILIITAIVVCLVVFS. The required for membrane targeting stretch occupies residues 95 to 118; that stretch reads ILPMIVILIITAIVVCLVVFSLPF. Topologically, residues 116-578 are cytoplasmic; the sequence is LPFDSSNTIY…SNDFVIAESP (463 aa). Residues 559-579 form a required for transfer to endosomes and contractile vacuoles; the protein is trapped in the Golgi region; the sequence is WPSSKGIPGFSNDFVIAESPE.

The protein resides in the contractile vacuole membrane. It is found in the endosome membrane. The protein localises to the golgi apparatus membrane. In Dictyostelium discoideum (Social amoeba), this protein is Golvesin (gol).